The chain runs to 49 residues: Large ribosomal subunit protein bL33 (49 aa).

Belongs to the bacterial ribosomal protein bL33 family.

In Clostridium perfringens (strain ATCC 13124 / DSM 756 / JCM 1290 / NCIMB 6125 / NCTC 8237 / Type A), this protein is Large ribosomal subunit protein bL33.